The following is a 274-amino-acid chain: Glutamate racemase (274 aa).

Residues 9-10 (DS) and 41-42 (YG) each bind substrate. Cys-73 functions as the Proton donor/acceptor in the catalytic mechanism. A substrate-binding site is contributed by 74 to 75 (NT). Catalysis depends on Cys-183, which acts as the Proton donor/acceptor. A substrate-binding site is contributed by 184–185 (TH).

This sequence belongs to the aspartate/glutamate racemases family.

The enzyme catalyses L-glutamate = D-glutamate. Its pathway is cell wall biogenesis; peptidoglycan biosynthesis. In terms of biological role, provides the (R)-glutamate required for cell wall biosynthesis. The chain is Glutamate racemase from Shewanella baltica (strain OS185).